The chain runs to 303 residues: RELT-like protein 2 (303 aa).

The helical transmembrane segment at 15 to 35 (LYMLFLLVLVFFLMGLVGFMI) threads the bilayer. Disordered regions lie at residues 47-68 (RTSRGSEPDDAQLQPPEDDDVN), 135-214 (CSRS…QPRT), and 249-303 (PCTL…AGGM). Ser52 carries the phosphoserine modification. 2 stretches are compositionally biased toward basic and acidic residues: residues 148-158 (RSKEGKSRPRP) and 172-188 (THIEKRYGLHEHRDGSP). The span at 194–212 (GSGGGQEPGGSQAAGGGQP) shows a compositional bias: gly residues. The span at 274 to 295 (GLSSQEANGQPTKLDTSGQQES) shows a compositional bias: polar residues.

This sequence belongs to the RELT family. Interacts with RELT, RELL1, OXSR1, PLSCR1 and TRAF2.

It is found in the cell membrane. Induces activation of MAPK14/p38 cascade, when overexpressed. Induces apoptosis, when overexpressed. This Mus musculus (Mouse) protein is RELT-like protein 2 (Rell2).